We begin with the raw amino-acid sequence, 424 residues long: Type II methyltransferase M.BspRI (424 aa).

The region spanning 58 to 408 (FNVLSLFCGA…KSIAQFAADY (351 aa)) is the SAM-dependent MTase C5-type domain. The active-site S-methylcysteine intermediate is the C156. Residue C181 is modified to S-methylcysteine; by autocatalysis.

It belongs to the class I-like SAM-binding methyltransferase superfamily. C5-methyltransferase family. Monomer. In terms of processing, in the absence of DNA, can self-methylate two cysteine residues.

It carries out the reaction a 2'-deoxycytidine in DNA + S-adenosyl-L-methionine = a 5-methyl-2'-deoxycytidine in DNA + S-adenosyl-L-homocysteine + H(+). Its function is as follows. A methylase, recognizes the double-stranded sequence 5'-GGCC-3', methylates C-3 on both strands, and protects the DNA from cleavage by the BspRI endonuclease. This is Type II methyltransferase M.BspRI (bspRIM) from Lysinibacillus sphaericus (Bacillus sphaericus).